The primary structure comprises 338 residues: Oxygen-dependent coproporphyrinogen-III oxidase (338 aa).

S104 serves as a coordination point for substrate. Residues H108 and H118 each contribute to the a divalent metal cation site. H118 (proton donor) is an active-site residue. 120 to 122 (NYR) contacts substrate. Residues H152 and H182 each coordinate a divalent metal cation. Residues 274-309 (YVEFNLVYDRGTIFGLQTNGRTESILMSLPPLVRWE) form an important for dimerization region.

It belongs to the aerobic coproporphyrinogen-III oxidase family. As to quaternary structure, homodimer. Requires a divalent metal cation as cofactor.

The protein resides in the cytoplasm. It carries out the reaction coproporphyrinogen III + O2 + 2 H(+) = protoporphyrinogen IX + 2 CO2 + 2 H2O. Its pathway is porphyrin-containing compound metabolism; protoporphyrin-IX biosynthesis; protoporphyrinogen-IX from coproporphyrinogen-III (O2 route): step 1/1. Functionally, involved in the heme and chlorophyll biosynthesis. Catalyzes the aerobic oxidative decarboxylation of propionate groups of rings A and B of coproporphyrinogen-III to yield the vinyl groups in protoporphyrinogen-IX. The chain is Oxygen-dependent coproporphyrinogen-III oxidase from Thermosynechococcus vestitus (strain NIES-2133 / IAM M-273 / BP-1).